Reading from the N-terminus, the 922-residue chain is Protein translocase subunit SecA (922 aa).

ATP is bound by residues Q87, 105–109, and D516; that span reads GEGKT. A disordered region spans residues 867–912; it reads YTAPTETGEPETLPDPRTAGAGGDGLNLPEGVRIGRNDPCPCGSGK. Residues C906, C908, C917, and H918 each coordinate Zn(2+).

This sequence belongs to the SecA family. As to quaternary structure, monomer and homodimer. Part of the essential Sec protein translocation apparatus which comprises SecA, SecYEG and auxiliary proteins SecDF-YajC and YidC. Zn(2+) is required as a cofactor.

The protein localises to the cell inner membrane. It is found in the cytoplasm. The enzyme catalyses ATP + H2O + cellular proteinSide 1 = ADP + phosphate + cellular proteinSide 2.. Part of the Sec protein translocase complex. Interacts with the SecYEG preprotein conducting channel. Has a central role in coupling the hydrolysis of ATP to the transfer of proteins into and across the cell membrane, serving both as a receptor for the preprotein-SecB complex and as an ATP-driven molecular motor driving the stepwise translocation of polypeptide chains across the membrane. In Paracidovorax citrulli (strain AAC00-1) (Acidovorax citrulli), this protein is Protein translocase subunit SecA.